The chain runs to 250 residues: Prolactin-7A2 (250 aa).

A signal peptide spans 1 to 29 (MQLSFSRPRPWTLLLMVVSNLLLWENVSS). N-linked (GlcNAc...) asparagine glycans are attached at residues N26, N35, N102, and N134. Intrachain disulfides connect C100–C215 and C232–C241.

Belongs to the somatotropin/prolactin family. Expression restricted to placental tissues. Trophoblast giant cells are found to be the major source.

The protein resides in the secreted. This is Prolactin-7A2 (Prl7a2) from Rattus norvegicus (Rat).